The following is a 103-amino-acid chain: Small ribosomal subunit protein uS10 (103 aa).

This sequence belongs to the universal ribosomal protein uS10 family. As to quaternary structure, part of the 30S ribosomal subunit.

Involved in the binding of tRNA to the ribosomes. The sequence is that of Small ribosomal subunit protein uS10 from Chromobacterium violaceum (strain ATCC 12472 / DSM 30191 / JCM 1249 / CCUG 213 / NBRC 12614 / NCIMB 9131 / NCTC 9757 / MK).